The sequence spans 65 residues: Large ribosomal subunit protein bL32 (65 aa).

Belongs to the bacterial ribosomal protein bL32 family.

This is Large ribosomal subunit protein bL32 from Metamycoplasma arthritidis (strain 158L3-1) (Mycoplasma arthritidis).